The following is a 351-amino-acid chain: Phosphoribosylformylglycinamidine cyclo-ligase (351 aa).

The protein belongs to the AIR synthase family.

Its subcellular location is the cytoplasm. The enzyme catalyses 2-formamido-N(1)-(5-O-phospho-beta-D-ribosyl)acetamidine + ATP = 5-amino-1-(5-phospho-beta-D-ribosyl)imidazole + ADP + phosphate + H(+). It participates in purine metabolism; IMP biosynthesis via de novo pathway; 5-amino-1-(5-phospho-D-ribosyl)imidazole from N(2)-formyl-N(1)-(5-phospho-D-ribosyl)glycinamide: step 2/2. The chain is Phosphoribosylformylglycinamidine cyclo-ligase from Burkholderia ambifaria (strain MC40-6).